A 146-amino-acid polypeptide reads, in one-letter code: Cytochrome c-type biogenesis protein CcmE (146 aa).

Residues 1–8 (MHPKRKKR) lie on the Cytoplasmic side of the membrane. The helical; Signal-anchor for type II membrane protein transmembrane segment at 9 to 29 (LLIVLAGLAVVAVASGLILNA) threads the bilayer. Residues 30-146 (FRSNLVFFHT…IQRAGETVVQ (117 aa)) lie on the Periplasmic side of the membrane. Positions 124 and 128 each coordinate heme.

This sequence belongs to the CcmE/CycJ family.

Its subcellular location is the cell inner membrane. Heme chaperone required for the biogenesis of c-type cytochromes. Transiently binds heme delivered by CcmC and transfers the heme to apo-cytochromes in a process facilitated by CcmF and CcmH. This is Cytochrome c-type biogenesis protein CcmE from Laribacter hongkongensis (strain HLHK9).